A 547-amino-acid polypeptide reads, in one-letter code: Inositol 1,4,5-trisphosphate receptor-interacting protein-like 1 (547 aa).

A signal peptide spans 1–16 (MAVISLLFLAVMYVVH). The Extracellular segment spans residues 17–96 (HPLMVSDRMD…PFQASGQDGG (80 aa)). Positions 28 to 66 (DTLARSRQLEKRMSEEMRQLEIEFEERSRAAEEKQKAEN) form a coiled coil. The helical transmembrane segment at 97 to 117 (PLGWMLGNLWNAGLFCLFLIF) threads the bilayer. Residues 118–547 (ELLRQNMQHE…LPCSPLAGGL (430 aa)) are Cytoplasmic-facing.

This sequence belongs to the ITPRIP family.

It is found in the cell membrane. Functions as a ligand of CD3E, inhibiting TCR-CD3 complex signaling to regulate T cell activation. Induces stable CD3E-NCK1 binding, thereby preventing the CD3E-ZAP70 interaction and subsequently inhibiting the activation of the downstream ERK-NFkB signaling cascade and calcium influx. The chain is Inositol 1,4,5-trisphosphate receptor-interacting protein-like 1 (Itpripl1) from Rattus norvegicus (Rat).